A 36-amino-acid chain; its full sequence is Pancreatic polypeptide (36 aa).

At Tyr36 the chain carries Tyrosine amide.

It belongs to the NPY family.

It is found in the secreted. In terms of biological role, hormone secreted by pancreatic cells that acts as a regulator of pancreatic and gastrointestinal functions probably by signaling through the G protein-coupled receptor NPY4R2. The chain is Pancreatic polypeptide (PPY) from Didelphis virginiana (North American opossum).